A 153-amino-acid chain; its full sequence is Peptide methionine sulfoxide reductase B6 (153 aa).

The MsrB domain occupies 28–149 (NEEWRTVLSP…NSVALKFSSA (122 aa)). The Zn(2+) site is built by cysteine 67, cysteine 70, cysteine 113, and cysteine 116. A disulfide bridge connects residues cysteine 85 and cysteine 138. The Nucleophile role is filled by cysteine 138.

The protein belongs to the MsrB Met sulfoxide reductase family. The cofactor is Zn(2+).

It localises to the cytoplasm. The protein resides in the cytosol. It carries out the reaction L-methionyl-[protein] + [thioredoxin]-disulfide + H2O = L-methionyl-(R)-S-oxide-[protein] + [thioredoxin]-dithiol. Catalyzes the reduction of methionine sulfoxide (MetSO) to methionine in proteins. Plays a protective role against oxidative stress by restoring activity to proteins that have been inactivated by methionine oxidation. MSRB family specifically reduces the MetSO R-enantiomer. The chain is Peptide methionine sulfoxide reductase B6 (MSRB6) from Arabidopsis thaliana (Mouse-ear cress).